Consider the following 429-residue polypeptide: UDP-N-acetylglucosamine 1-carboxyvinyltransferase 2 (429 aa).

22–23 (KN) contacts phosphoenolpyruvate. Arg-93 lines the UDP-N-acetyl-alpha-D-glucosamine pocket. Catalysis depends on Cys-117, which acts as the Proton donor. The residue at position 117 (Cys-117) is a 2-(S-cysteinyl)pyruvic acid O-phosphothioketal. Residues 122-126 (RPIDQ), Asp-305, and Ile-327 each bind UDP-N-acetyl-alpha-D-glucosamine.

Belongs to the EPSP synthase family. MurA subfamily.

Its subcellular location is the cytoplasm. The enzyme catalyses phosphoenolpyruvate + UDP-N-acetyl-alpha-D-glucosamine = UDP-N-acetyl-3-O-(1-carboxyvinyl)-alpha-D-glucosamine + phosphate. The protein operates within cell wall biogenesis; peptidoglycan biosynthesis. Functionally, cell wall formation. Adds enolpyruvyl to UDP-N-acetylglucosamine. The chain is UDP-N-acetylglucosamine 1-carboxyvinyltransferase 2 from Bacillus cereus (strain ATCC 14579 / DSM 31 / CCUG 7414 / JCM 2152 / NBRC 15305 / NCIMB 9373 / NCTC 2599 / NRRL B-3711).